Reading from the N-terminus, the 360-residue chain is Peptide chain release factor 1 (360 aa).

At Gln235 the chain carries N5-methylglutamine.

The protein belongs to the prokaryotic/mitochondrial release factor family. Methylated by PrmC. Methylation increases the termination efficiency of RF1.

It is found in the cytoplasm. Functionally, peptide chain release factor 1 directs the termination of translation in response to the peptide chain termination codons UAG and UAA. The chain is Peptide chain release factor 1 from Dechloromonas aromatica (strain RCB).